Reading from the N-terminus, the 169-residue chain is Large ribosomal subunit protein uL10 (169 aa).

It belongs to the universal ribosomal protein uL10 family. As to quaternary structure, part of the ribosomal stalk of the 50S ribosomal subunit. The N-terminus interacts with L11 and the large rRNA to form the base of the stalk. The C-terminus forms an elongated spine to which L12 dimers bind in a sequential fashion forming a multimeric L10(L12)X complex.

Forms part of the ribosomal stalk, playing a central role in the interaction of the ribosome with GTP-bound translation factors. In Orientia tsutsugamushi (strain Ikeda) (Rickettsia tsutsugamushi), this protein is Large ribosomal subunit protein uL10.